A 318-amino-acid polypeptide reads, in one-letter code: Isoflavone reductase (318 aa).

Residues 11 to 17 (GATGAIG), arginine 36, and lysine 44 contribute to the NADP(+) site. Lysine 144 acts as the Proton acceptor in catalysis. NADP(+) is bound at residue arginine 148.

Belongs to the NmrA-type oxidoreductase family. Isoflavone reductase subfamily.

It carries out the reaction (3R)-vestitone + NADP(+) = 2'-hydroxyformononetin + NADPH + 2 H(+). The protein operates within phytoalexin biosynthesis; pterocarpan phytoalexin biosynthesis. Reduces achiral isoflavones to chiral isoflavanones during the biosynthesis of chiral pterocarpan phytoalexins. The reduction product (sophrol) is a third isomer, which represents the penultimate intermediate in the synthesis of the phytoalexin (+)-pisatin, the major phytoalexin in pea. The chain is Isoflavone reductase (IFR) from Pisum sativum (Garden pea).